The following is a 327-amino-acid chain: Biotin synthase (327 aa).

The 225-residue stretch at 49 to 273 folds into the Radical SAM core domain; it reads FNKDKIDLCS…ICIARIALPD (225 aa). Cys67, Cys71, and Cys74 together coordinate [4Fe-4S] cluster. Residues Ser110, Cys142, Cys201, and Arg277 each contribute to the [2Fe-2S] cluster site.

The protein belongs to the radical SAM superfamily. Biotin synthase family. As to quaternary structure, homodimer. [4Fe-4S] cluster serves as cofactor. Requires [2Fe-2S] cluster as cofactor.

It catalyses the reaction (4R,5S)-dethiobiotin + (sulfur carrier)-SH + 2 reduced [2Fe-2S]-[ferredoxin] + 2 S-adenosyl-L-methionine = (sulfur carrier)-H + biotin + 2 5'-deoxyadenosine + 2 L-methionine + 2 oxidized [2Fe-2S]-[ferredoxin]. Its pathway is cofactor biosynthesis; biotin biosynthesis; biotin from 7,8-diaminononanoate: step 2/2. Its function is as follows. Catalyzes the conversion of dethiobiotin (DTB) to biotin by the insertion of a sulfur atom into dethiobiotin via a radical-based mechanism. This is Biotin synthase from Methanococcus maripaludis (strain C6 / ATCC BAA-1332).